A 327-amino-acid chain; its full sequence is MALVHKLLRGTYILRKFSKPASALYPFLGIRFAEYSSSLQKPVASPGKASSQRKTEGDLQGDHQKEVALDITSSEEKPDVSFDKAIRDEAAYHFRHLKDEIVDHWRGPEGRPLREVLLEQAKVVWQFRGKEDLDKWTVTSDKTIGGRSEVFLKMGKNNQSALLYGTLSSEAPHDGESTRSGYCAMISRIPRGAFERKVSYDWSQFNTLYLRVRGDGRPWMVNIKEDTDFFQRTNQMYSYFMFTRGGPYWQEVKIPFSKFFFSNRGRIRDVQHELPLDKISSIGFTLADKVDGPFFLEIDFIGVFTDPAHTEEFAYENSPELNPRLFK.

The N-terminal 24 residues, 1 to 24 (MALVHKLLRGTYILRKFSKPASAL), are a transit peptide targeting the mitochondrion. Positions 42-63 (PVASPGKASSQRKTEGDLQGDH) are disordered. Basic and acidic residues predominate over residues 53–63 (RKTEGDLQGDH). Ser318 carries the phosphoserine modification.

Belongs to the CIA30 family. In terms of assembly, part of the mitochondrial complex I assembly/MCIA complex that comprises at least the core subunits TMEM126B, NDUFAF1, ECSIT and ACAD9 and complement subunits such as COA1 and TMEM186. Interacts with ECSIT. Interacts with ACAD9. At early stages of complex I assembly, it is found in intermediate subcomplexes that contain different subunits including NDUFB6, NDUFA6, NDUFA9, NDUFS3, NDUFS7, ND1, ND2 and ND3. Interacts with TMEM70 and TMEM242.

The protein localises to the mitochondrion. It localises to the mitochondrion matrix. In terms of biological role, as part of the MCIA complex, involved in the assembly of the mitochondrial complex I. The polypeptide is Complex I intermediate-associated protein 30, mitochondrial (Pongo pygmaeus (Bornean orangutan)).